Consider the following 144-residue polypeptide: Large ribosomal subunit protein uL15 (144 aa).

Residues 1-55 (MQLNELKPVAGSRFKRLRKGRGLSSGHGFTSGRGTKGQKAHGKTRLGFEGGQMPL) form a disordered region. Residues 23–35 (LSSGHGFTSGRGT) show a composition bias toward gly residues.

The protein belongs to the universal ribosomal protein uL15 family. In terms of assembly, part of the 50S ribosomal subunit.

Functionally, binds to the 23S rRNA. The polypeptide is Large ribosomal subunit protein uL15 (Limosilactobacillus fermentum (strain NBRC 3956 / LMG 18251) (Lactobacillus fermentum)).